The chain runs to 31 residues: Photosystem II reaction center protein M (31 aa).

A helical membrane pass occupies residues I5 to L25.

Belongs to the PsbM family. As to quaternary structure, PSII is composed of 1 copy each of membrane proteins PsbA, PsbB, PsbC, PsbD, PsbE, PsbF, PsbH, PsbI, PsbJ, PsbK, PsbL, PsbM, PsbT, PsbX, PsbY, PsbZ, Psb30/Ycf12, at least 3 peripheral proteins of the oxygen-evolving complex and a large number of cofactors. It forms dimeric complexes.

Its subcellular location is the plastid. The protein localises to the chloroplast thylakoid membrane. One of the components of the core complex of photosystem II (PSII). PSII is a light-driven water:plastoquinone oxidoreductase that uses light energy to abstract electrons from H(2)O, generating O(2) and a proton gradient subsequently used for ATP formation. It consists of a core antenna complex that captures photons, and an electron transfer chain that converts photonic excitation into a charge separation. This subunit is found at the monomer-monomer interface. This is Photosystem II reaction center protein M from Mesostigma viride (Green alga).